The following is a 467-amino-acid chain: tRNA-2-methylthio-N(6)-dimethylallyladenosine synthase (467 aa).

The 117-residue stretch at 22–138 folds into the MTTase N-terminal domain; sequence GSYWITTFGC…LETLLNKVET (117 aa). Residues Cys-31, Cys-67, Cys-101, Cys-173, Cys-177, and Cys-180 each contribute to the [4Fe-4S] cluster site. A Radical SAM core domain is found at 159–396; that stretch reads RDSSICAWVN…NSLVEIKAKE (238 aa). Residues 399–467 enclose the TRAM domain; it reads VRYKDRVEEV…AFSLSGVIEN (69 aa).

It belongs to the methylthiotransferase family. MiaB subfamily. In terms of assembly, monomer. [4Fe-4S] cluster is required as a cofactor.

It localises to the cytoplasm. It carries out the reaction N(6)-dimethylallyladenosine(37) in tRNA + (sulfur carrier)-SH + AH2 + 2 S-adenosyl-L-methionine = 2-methylsulfanyl-N(6)-dimethylallyladenosine(37) in tRNA + (sulfur carrier)-H + 5'-deoxyadenosine + L-methionine + A + S-adenosyl-L-homocysteine + 2 H(+). Its function is as follows. Catalyzes the methylthiolation of N6-(dimethylallyl)adenosine (i(6)A), leading to the formation of 2-methylthio-N6-(dimethylallyl)adenosine (ms(2)i(6)A) at position 37 in tRNAs that read codons beginning with uridine. This is tRNA-2-methylthio-N(6)-dimethylallyladenosine synthase from Prochlorococcus marinus (strain MIT 9211).